Consider the following 145-residue polypeptide: D-aminoacyl-tRNA deacylase (145 aa).

The Gly-cisPro motif, important for rejection of L-amino acids signature appears at 137–138 (GP).

The protein belongs to the DTD family. Homodimer.

It is found in the cytoplasm. It catalyses the reaction glycyl-tRNA(Ala) + H2O = tRNA(Ala) + glycine + H(+). It carries out the reaction a D-aminoacyl-tRNA + H2O = a tRNA + a D-alpha-amino acid + H(+). Functionally, an aminoacyl-tRNA editing enzyme that deacylates mischarged D-aminoacyl-tRNAs. Also deacylates mischarged glycyl-tRNA(Ala), protecting cells against glycine mischarging by AlaRS. Acts via tRNA-based rather than protein-based catalysis; rejects L-amino acids rather than detecting D-amino acids in the active site. By recycling D-aminoacyl-tRNA to D-amino acids and free tRNA molecules, this enzyme counteracts the toxicity associated with the formation of D-aminoacyl-tRNA entities in vivo and helps enforce protein L-homochirality. The polypeptide is D-aminoacyl-tRNA deacylase (Streptomyces avermitilis (strain ATCC 31267 / DSM 46492 / JCM 5070 / NBRC 14893 / NCIMB 12804 / NRRL 8165 / MA-4680)).